Consider the following 163-residue polypeptide: Nucleotide-binding protein Dvul_1191 (163 aa).

This sequence belongs to the YajQ family.

In terms of biological role, nucleotide-binding protein. The polypeptide is Nucleotide-binding protein Dvul_1191 (Nitratidesulfovibrio vulgaris (strain DP4) (Desulfovibrio vulgaris)).